The primary structure comprises 346 residues: Probable dolichyl-diphosphooligosaccharide--protein glycosyltransferase subunit 3B (346 aa).

A signal peptide spans 1–22 (MALKSKLVSLLFLIATLSSTFA). Topologically, residues 23–189 (ASFSDSDSDS…KVGPIQRPPL (167 aa)) are lumenal. Asn-108 is a glycosylation site (N-linked (GlcNAc...) asparagine). The helical transmembrane segment at 190-210 (LSKPQIGIIVALIVIATPFII) threads the bilayer. The Cytoplasmic portion of the chain corresponds to 211–225 (KRVLKGETILHDTRL). A helical transmembrane segment spans residues 226-246 (WLSGAIFIYFFSVAGTMHNII). The Lumenal portion of the chain corresponds to 247-277 (RKMPMFLQDRNDPNKLVFFYQGSGMQLGAEG). The chain crosses the membrane as a helical span at residues 278-298 (FAVGFLYTVVGLLLAFVTNVL). At 299–308 (VRVKNITAQR) the chain is on the cytoplasmic side. The helical transmembrane segment at 309–329 (LIMLLALFISFWAVKKVVYLD) threads the bilayer. The Lumenal portion of the chain corresponds to 330-346 (NWKTGYGIHPYWPSSWR).

The protein belongs to the OST3/OST6 family. Component of the oligosaccharyltransferase (OST) complex.

Its subcellular location is the endoplasmic reticulum membrane. Its function is as follows. Subunit of the oligosaccharyl transferase (OST) complex that catalyzes the initial transfer of a defined glycan (Glc(3)Man(9)GlcNAc(2) in eukaryotes) from the lipid carrier dolichol-pyrophosphate to an asparagine residue within an Asn-X-Ser/Thr consensus motif in nascent polypeptide chains, the first step in protein N-glycosylation. N-glycosylation occurs cotranslationally and the complex associates with the Sec61 complex at the channel-forming translocon complex that mediates protein translocation across the endoplasmic reticulum (ER). All subunits are required for a maximal enzyme activity. The chain is Probable dolichyl-diphosphooligosaccharide--protein glycosyltransferase subunit 3B (OST3B) from Arabidopsis thaliana (Mouse-ear cress).